The primary structure comprises 460 residues: MKEIDKYAGKNILVLGLGRSGFAVSKLLLKLGARLTLNDKADLAADPKAKQLADLGVRVIGGSHPVDLFDQEKFDYLVKNPGIPYENPMVAKASEKGVPIITEPEVALSASESPYVCVTGSNGKTTTVMLTQQIMDHYLQKQGHHAHAVGNIGCPISEVVLNQAGPDDLLVVEMSSFQLMGVTDIEPKVAAIVDIYNNVHLDYHKTFDNYVDAKLNVGRFQKASDYFLANFDQKDILAREEKATKAKILTFSENDPVADFYIGQDYLMHGEEKMMKIADIKLPGIHNLQNSLVAIGISSLMGAGKDDIAAVLSTFTGAEHRLQYVTTLDGVKVYNDSKSTNIEAATVAIQSFKQPEVLLAGGLDRGFVFDSLVDLFKKHVKAIVTYGETRYLLADAARKAGIKTIVVVDNLHEGVKAASKLAEAGDVLLFSPACASWDQFKTFEERGEYFVKYVKELEEK.

G120–T126 is an ATP binding site.

This sequence belongs to the MurCDEF family.

The protein localises to the cytoplasm. The catalysed reaction is UDP-N-acetyl-alpha-D-muramoyl-L-alanine + D-glutamate + ATP = UDP-N-acetyl-alpha-D-muramoyl-L-alanyl-D-glutamate + ADP + phosphate + H(+). Its pathway is cell wall biogenesis; peptidoglycan biosynthesis. In terms of biological role, cell wall formation. Catalyzes the addition of glutamate to the nucleotide precursor UDP-N-acetylmuramoyl-L-alanine (UMA). The protein is UDP-N-acetylmuramoylalanine--D-glutamate ligase of Lactobacillus delbrueckii subsp. bulgaricus (strain ATCC 11842 / DSM 20081 / BCRC 10696 / JCM 1002 / NBRC 13953 / NCIMB 11778 / NCTC 12712 / WDCM 00102 / Lb 14).